The chain runs to 41 residues: Alpha-conotoxin TxIB (41 aa).

Positions 1–20 are excised as a propeptide; that stretch reads FDGRNTSANNKATDLMALPV. 2 disulfide bridges follow: Cys-23–Cys-29 and Cys-24–Cys-37. Residues 25 to 27 form a ser-Xaa-Pro motif, crucial for potent interaction with nAChR region; that stretch reads SDP. Cys-37 carries the post-translational modification Cysteine amide; in Alpha-conotoxin TxIB. The propeptide occupies 39–41; it reads GRR.

The protein belongs to the conotoxin A superfamily. In terms of tissue distribution, expressed by the venom duct.

Its subcellular location is the secreted. Its function is as follows. Alpha-conotoxins act on postsynaptic membranes, they bind to the nicotinic acetylcholine receptors (nAChR) and thus inhibit them. This conotoxin is a subtype-specific blocker of alpha-6/alpha-3-beta-2-beta-3 (CHRNA6/CHRNA3-CHRNB2-CHRNB3) nAChRs nicotinic acetylcholine receptors (nAChRs) (IC(50)=28.4 nM). The chain is Alpha-conotoxin TxIB from Conus textile (Cloth-of-gold cone).